Consider the following 549-residue polypeptide: Eukaryotic translation initiation factor 4B2 (549 aa).

Disordered regions lie at residues 1-446 (MSKP…DLIR) and 465-549 (FRPR…REGW). Low complexity predominate over residues 24–46 (AEATATAADSQSFPSLKEAATAK). Gly residues-rich tracts occupy residues 96 to 109 (RLGG…GGRS) and 126 to 136 (SWGGGGGGRRS). The Nuclear localization signal 1 motif lies at 169–176 (GKKSLPSF). Over residues 184 to 218 (RYGGGGGSFGGGGGGGAGSYGGGGAGAGSGGGGGF) the composition is skewed to gly residues. Residues 234–241 (SSTFGSGF) carry the Nuclear localization signal 2 motif. Over residues 263 to 278 (QEERRRLVFEPRKADT) the composition is skewed to basic and acidic residues. Positions 281 to 292 (SETPTAVKTSKP) are enriched in polar residues. Over residues 299–323 (RPREQVLAEKGLDWKKLDSDIEAKK) the composition is skewed to basic and acidic residues. Positions 327-349 (SRPSSAQSSRPSSAQSNRSESSA) are enriched in low complexity. 3 stretches are compositionally biased toward basic and acidic residues: residues 369-431 (AKPR…KESQ), 485-507 (ERPH…ERPR), and 518-549 (PVDD…REGW).

It belongs to the eIF-4 subunit B family. As to quaternary structure, homodimer. Nonspherical monomer. mRNA-discriminating component of initiation complexes. In terms of processing, phosphorylated.

Its subcellular location is the nucleus. Its function is as follows. Promotes the eIF4F and eIF4A RNA-dependent ATP-hydrolysis activity with different efficiency depending on mRNAs, thus providing mRNA discrimination during initiation of translation. This Arabidopsis thaliana (Mouse-ear cress) protein is Eukaryotic translation initiation factor 4B2.